The following is a 331-amino-acid chain: MGGAARLSAPRALVLWAVLGAAAHIGPAPDPEDWWSYKDNLQGNFVPGPPFWGLVNAAWSLCAVGKRQSPVDVELKRVLYDPFLPPLRLSTGGEKLRGTLYNTGRHVSFLPAPRPVVNVSGGPLLYSHRLSELLLLFGAHDGAGSEHQINHQGFSAEVQLIHFNQELYGNLSAASRGPNGLAILSLFVNVSQVAGNSNPFLSRLLNRDTITRISYKNDAYFLQDLSLELLFPESFGFITYQGSLSTPPCSETVTWILIDRALNITSLQMHSLRLLSQNPPSQIFQSLSGNGRPLQPLAHRALRGNRDPRHPERRCRGPNYRLHVDGAPHGR.

Residues 1 to 23 form the signal peptide; that stretch reads MGGAARLSAPRALVLWAVLGAAA. The 274-residue stretch at 33-306 folds into the Alpha-carbonic anhydrase domain; the sequence is DWWSYKDNLQ…LAHRALRGNR (274 aa). N-linked (GlcNAc...) asparagine glycosylation is found at Asn-118, Asn-170, Asn-189, and Asn-263. Residues 303–331 are disordered; it reads RGNRDPRHPERRCRGPNYRLHVDGAPHGR. Over residues 322 to 331 the composition is skewed to basic and acidic residues; it reads LHVDGAPHGR.

This sequence belongs to the alpha-carbonic anhydrase family.

Its subcellular location is the secreted. Does not have a catalytic activity. This chain is Carbonic anhydrase-related protein 11 (CA11), found in Sus scrofa (Pig).